The sequence spans 808 residues: DNA replication licensing factor MCM3 (808 aa).

Ala-2 bears the N-acetylalanine mark. Phosphoserine is present on residues Ser-160 and Ser-275. Position 293 is an N6-acetyllysine (Lys-293). In terms of domain architecture, MCM spans 295–502; sequence IFDQLAKSLA…QDREISDHVL (208 aa). 5 residues coordinate ADP: Gln-353, Leu-393, Glu-394, Ala-395, and Ala-397. The short motif at 477–480 is the Arginine finger element; that stretch reads SRFD. An ATP-binding site is contributed by Ala-523. Phosphoserine; by ATM is present on Ser-535. Position 547 is an N6-acetyllysine (Lys-547). Ser-611 carries the post-translational modification Phosphoserine. Residues 662–739 form a disordered region; it reads KKRKKRSEDE…ETKESQKVEL (78 aa). Residue Arg-664 coordinates ATP. 2 positions are modified to phosphoserine: Ser-668 and Ser-672. 2 stretches are compositionally biased toward acidic residues: residues 670–681 and 704–717; these read DESETEDEEEKS and SYDP…EEEM. Thr-674 is subject to Phosphothreonine. Ser-681 is modified (phosphoserine). Residue Tyr-708 is modified to Phosphotyrosine. The residue at position 711 (Ser-711) is a Phosphoserine. Phosphothreonine occurs at positions 713, 722, and 725. The span at 727–739 shows a compositional bias: basic and acidic residues; sequence DSQETKESQKVEL. 2 positions are modified to phosphoserine: Ser-728 and Ser-734.

This sequence belongs to the MCM family. Component of the MCM2-7 complex. The complex forms a toroidal hexameric ring with the proposed subunit order MCM2-MCM6-MCM4-MCM7-MCM3-MCM5. Component of the CMG helicase complex, a hexameric ring of related MCM2-7 subunits stabilized by CDC45 and the tetrameric GINS complex. Associated with the replication-specific DNA polymerase alpha. Interacts with MCMBP. Interacts with ANKRD17. Interacts with MCM3AP isoform MCM3AP; this interaction leads to MCM3 acetylation. In terms of processing, acetylated by MCM3AP. O-glycosylated (O-GlcNAcylated), in a cell cycle-dependent manner.

The protein resides in the nucleus. It localises to the chromosome. It carries out the reaction ATP + H2O = ADP + phosphate + H(+). Its function is as follows. Acts as a component of the MCM2-7 complex (MCM complex) which is the replicative helicase essential for 'once per cell cycle' DNA replication initiation and elongation in eukaryotic cells. Core component of CDC45-MCM-GINS (CMG) helicase, the molecular machine that unwinds template DNA during replication, and around which the replisome is built. The active ATPase sites in the MCM2-7 ring are formed through the interaction surfaces of two neighboring subunits such that a critical structure of a conserved arginine finger motif is provided in trans relative to the ATP-binding site of the Walker A box of the adjacent subunit. The six ATPase active sites, however, are likely to contribute differentially to the complex helicase activity. Required for the entry in S phase and for cell division. The protein is DNA replication licensing factor MCM3 of Homo sapiens (Human).